A 398-amino-acid polypeptide reads, in one-letter code: 1-deoxy-D-xylulose 5-phosphate reductoisomerase (398 aa).

Residues Thr-10, Gly-11, Ser-12, Ile-13, Asn-38, and Asn-124 each contribute to the NADPH site. Residue Lys-125 coordinates 1-deoxy-D-xylulose 5-phosphate. Position 126 (Glu-126) interacts with NADPH. Asp-150 contacts Mn(2+). The 1-deoxy-D-xylulose 5-phosphate site is built by Ser-151, Glu-152, Ser-176, and His-199. Glu-152 is a binding site for Mn(2+). Position 205 (Gly-205) interacts with NADPH. Ser-212, Asn-217, Lys-218, and Glu-221 together coordinate 1-deoxy-D-xylulose 5-phosphate. A Mn(2+)-binding site is contributed by Glu-221.

It belongs to the DXR family. Requires Mg(2+) as cofactor. Mn(2+) serves as cofactor.

It carries out the reaction 2-C-methyl-D-erythritol 4-phosphate + NADP(+) = 1-deoxy-D-xylulose 5-phosphate + NADPH + H(+). Its pathway is isoprenoid biosynthesis; isopentenyl diphosphate biosynthesis via DXP pathway; isopentenyl diphosphate from 1-deoxy-D-xylulose 5-phosphate: step 1/6. Its function is as follows. Catalyzes the NADPH-dependent rearrangement and reduction of 1-deoxy-D-xylulose-5-phosphate (DXP) to 2-C-methyl-D-erythritol 4-phosphate (MEP). This chain is 1-deoxy-D-xylulose 5-phosphate reductoisomerase, found in Rippkaea orientalis (strain PCC 8801 / RF-1) (Cyanothece sp. (strain PCC 8801)).